The primary structure comprises 639 residues: MESADSAGKGSTEQSESQRQSQMDRLDREEAFYQFVNNLNEDDYRLMRDNNLLGTPGEITKEELLRRLQQIKEGPPQPSTEGTRGDPVSASGDPAEDSSNGDSIIDWLNSVRQTGNTTRSGQRGNQSWRAVSRTNPNSGDFRFSLEINVNRTSGNPSMPSLEQSSEMPGAEDMEVSSQGENENEPEPVAPRVAQAEVTEEAPVQRGQRRARSRSPDQRRTRARTDRSRSPLHQAVEPPIRRAQHSSSQTVDASSTEEAEGSSRTRHHVSSQMQNSSSSNETEGSSRTRQHITARQQALGTEGQSQSQTQTQSQSQTQTQSQTQSQSTVHLSNPESRSSSQPPQTDSSSNAETTGTGQRPPTIVLDLQVRRVRPGDYRQRDSIANRTRSRSQTPNNTVTYESERGGFRRTFSRSERAGVRTYVSTIRIPIRRILNTGLSETTSVAIQTMLRQIMTGFGELSYFMYNDNDTDPNNPTPVSPPAAVPGEAQNLVSPEPPAPIVEPPEPVAPVESEEGSNVSTSSARREGRNSRGGVTFEESGSLPFLSLAQFFLLNEDDDDQPRGLTKEQIDNLSTRNFGENDALKTCSVCITEYTEGNKLRKLPCSHEYHVHCIDRWLSENSTCPICRRAVLVAGNRESIV.

3 disordered regions span residues 1 to 28 (MESA…RLDR), 67 to 403 (RLQQ…ESER), and 467 to 534 (NDTD…GGVT). Over residues 11–21 (STEQSESQRQS) the composition is skewed to low complexity. 2 stretches are compositionally biased toward polar residues: residues 110-138 (SVRQ…NPNS) and 147-166 (INVN…QSSE). A compositionally biased stretch (basic and acidic residues) spans 213 to 228 (RSPDQRRTRARTDRSR). A compositionally biased stretch (polar residues) spans 244–253 (HSSSQTVDAS). The segment covering 269–286 (SSQMQNSSSSNETEGSSR) has biased composition (low complexity). Polar residues predominate over residues 290–302 (HITARQQALGTEG). Composition is skewed to low complexity over residues 303–327 (QSQS…SQST) and 335–348 (SRSS…DSSS). Over residues 349-358 (NAETTGTGQR) the composition is skewed to polar residues. Positions 372–382 (RPGDYRQRDSI) are enriched in basic and acidic residues. The segment covering 383–399 (ANRTRSRSQTPNNTVTY) has biased composition (polar residues). Pro residues-rich tracts occupy residues 473–482 (NPTPVSPPAA) and 493–506 (PEPP…PEPV). The segment at 585–626 (CSVCITEYTEGNKLRKLPCSHEYHVHCIDRWLSENSTCPICR) adopts an RING-type; atypical zinc-finger fold. A PDZ-binding motif is present at residues 636 to 639 (ESIV).

It belongs to the RNF12 family. As to quaternary structure, forms homodimers through the C-terminal region. The N-terminus interacts with the homeobox of LIM/homeobox factor lhx1/lim1, with lhx3/lim3 and lhx5/lim5, and with the N-terminus of ldb1.

The protein resides in the nucleus. The enzyme catalyses S-ubiquitinyl-[E2 ubiquitin-conjugating enzyme]-L-cysteine + [acceptor protein]-L-lysine = [E2 ubiquitin-conjugating enzyme]-L-cysteine + N(6)-ubiquitinyl-[acceptor protein]-L-lysine.. The protein operates within protein modification; protein ubiquitination. Acts as an E3 ubiquitin-protein ligase specific for ldb1, mediating ubiquitination and proteasome-dependent degradation of excess ldb1 in a RING-dependent manner. Does not degrade ldb1 bound to lhx1/lim1, nor lim1 itself and thus contributes to the establishment of proper ldb1-lhx1/lim1 stoichiometry and the formation of a ldb1-lhx1/lim1 complex. Interferes with Spemann organizer function and suppresses secondary axis formation induced by ldb1 and lhx1/lim1. This is E3 ubiquitin-protein ligase RNF12 from Xenopus tropicalis (Western clawed frog).